The following is a 301-amino-acid chain: HTH-type transcriptional regulator MtrA (301 aa).

The HTH araC/xylS-type domain occupies 196–297; it reads KRLGHLIQKV…HVSPGQYRKE (102 aa). 2 DNA-binding regions (H-T-H motif) span residues 216 to 237 and 264 to 287; these read DKMVAAANMSRAQLMRRFKSQV and VLEVALSVGFQSETHFGKAFKRQY.

Its activity is regulated as follows. The affinity for the mtrCDE promoter increases 2-fold in the presence of TX-100, a known effector and substrate of the MtrCDE pump. Involved in the induction of the mtrCDE-encoded efflux pump. Binds specifically to the mtrCDE promoter region. Required for high-level inducible resistance to the detergent Triton X-100 (TX-100) and the spermicide nonoxynol-9 (N-9). This is HTH-type transcriptional regulator MtrA from Neisseria gonorrhoeae.